A 363-amino-acid chain; its full sequence is 3-isopropylmalate dehydrogenase (363 aa).

NAD(+) is bound at residue 77-90; sequence GPKWQHLPPDQQPE. Substrate is bound by residues Arg98, Arg108, Arg137, and Asp226. Positions 226, 250, and 254 each coordinate Mg(2+). NAD(+) is bound at residue 284–296; sequence GSAPDIAGKNIAN.

This sequence belongs to the isocitrate and isopropylmalate dehydrogenases family. LeuB type 1 subfamily. In terms of assembly, homodimer. Requires Mg(2+) as cofactor. Mn(2+) is required as a cofactor.

The protein resides in the cytoplasm. It catalyses the reaction (2R,3S)-3-isopropylmalate + NAD(+) = 4-methyl-2-oxopentanoate + CO2 + NADH. The protein operates within amino-acid biosynthesis; L-leucine biosynthesis; L-leucine from 3-methyl-2-oxobutanoate: step 3/4. Functionally, catalyzes the oxidation of 3-carboxy-2-hydroxy-4-methylpentanoate (3-isopropylmalate) to 3-carboxy-4-methyl-2-oxopentanoate. The product decarboxylates to 4-methyl-2 oxopentanoate. The polypeptide is 3-isopropylmalate dehydrogenase (Buchnera aphidicola subsp. Pemphigus spyrothecae).